The following is a 319-amino-acid chain: Biotin synthase (319 aa).

Residues 41 to 267 enclose the Radical SAM core domain; sequence YKGNKVKVCS…TPDIMICGGR (227 aa). 3 residues coordinate [4Fe-4S] cluster: cysteine 59, cysteine 63, and cysteine 66. Residue cysteine 192 coordinates [2Fe-2S] cluster.

The protein belongs to the radical SAM superfamily. Biotin synthase family. Homodimer. Requires [4Fe-4S] cluster as cofactor. [2Fe-2S] cluster serves as cofactor.

It carries out the reaction (4R,5S)-dethiobiotin + (sulfur carrier)-SH + 2 reduced [2Fe-2S]-[ferredoxin] + 2 S-adenosyl-L-methionine = (sulfur carrier)-H + biotin + 2 5'-deoxyadenosine + 2 L-methionine + 2 oxidized [2Fe-2S]-[ferredoxin]. Its pathway is cofactor biosynthesis; biotin biosynthesis; biotin from 7,8-diaminononanoate: step 2/2. Functionally, catalyzes the conversion of dethiobiotin (DTB) to biotin by the insertion of a sulfur atom into dethiobiotin via a radical-based mechanism. The sequence is that of Biotin synthase from Endomicrobium trichonymphae.